The following is an 83-amino-acid chain: UPF0147 protein TK2131 (83 aa).

The protein belongs to the UPF0147 family.

The chain is UPF0147 protein TK2131 from Thermococcus kodakarensis (strain ATCC BAA-918 / JCM 12380 / KOD1) (Pyrococcus kodakaraensis (strain KOD1)).